Consider the following 219-residue polypeptide: Vacuolar protein sorting-associated protein 32 homolog 2 (219 aa).

Coiled coils occupy residues 10–41 (KQEA…KKAG) and 117–176 (TNID…QLLQ). Residues 168–219 (EELESQLLQPATTAPPLPSVPVPAGRQPARPVPQKRTAEEEELAALQAEMAL) form a disordered region.

It belongs to the SNF7 family. Component of the endosomal sorting required for transport complex III (ESCRT-III), composed at least of VPS2, VPS20, VPS24 and VPS32. Interacts with SKD1. Interacts with BRO1/ALIX.

It localises to the endosome. Its function is as follows. Component of the ESCRT-III complex, which is required for multivesicular bodies (MVBs) formation and sorting of endosomal cargo proteins into MVBs. The ESCRT-III complex is probably involved in the concentration of MVB cargo. This Arabidopsis thaliana (Mouse-ear cress) protein is Vacuolar protein sorting-associated protein 32 homolog 2 (VPS32.2).